We begin with the raw amino-acid sequence, 148 residues long: UPF0179 protein UNCMA_27840 (148 aa).

The protein belongs to the UPF0179 family.

In Methanocella arvoryzae (strain DSM 22066 / NBRC 105507 / MRE50), this protein is UPF0179 protein UNCMA_27840.